A 184-amino-acid chain; its full sequence is Large ribosomal subunit protein uL5 (184 aa).

This sequence belongs to the universal ribosomal protein uL5 family. As to quaternary structure, part of the 50S ribosomal subunit; part of the 5S rRNA/L5/L18/L25 subcomplex. Contacts the 5S rRNA and the P site tRNA. Forms a bridge to the 30S subunit in the 70S ribosome.

Its function is as follows. This is one of the proteins that bind and probably mediate the attachment of the 5S RNA into the large ribosomal subunit, where it forms part of the central protuberance. In the 70S ribosome it contacts protein S13 of the 30S subunit (bridge B1b), connecting the 2 subunits; this bridge is implicated in subunit movement. Contacts the P site tRNA; the 5S rRNA and some of its associated proteins might help stabilize positioning of ribosome-bound tRNAs. The polypeptide is Large ribosomal subunit protein uL5 (Wolinella succinogenes (strain ATCC 29543 / DSM 1740 / CCUG 13145 / JCM 31913 / LMG 7466 / NCTC 11488 / FDC 602W) (Vibrio succinogenes)).